The chain runs to 194 residues: MTPRGTAEPQVRPGIAEDLTGLTNLYNHYVLRTPITFDTVPLTPEGRMQWFLSHPKDGPHRLMVAAEPAPSGPERLLGYATSSPLRPKAAYATSAEVSVYCAPDAAGRGVGTALYTALFDALAGEDLHRAYAGVTQPNDASHRLHTRFDFRPIGTYGQVGRKFGRYWDVRWYEKELGGGGADGGAGRLHQTGRM.

The N-acetyltransferase domain maps to 9 to 173; the sequence is PQVRPGIAED…GRYWDVRWYE (165 aa).

Belongs to the acetyltransferase family. PAT/BAR subfamily.

This is N-acetyltransferase (nat) from Streptomyces griseus.